The following is a 489-amino-acid chain: MAPAVFTSDYWKKYFSNKKKPTVKNTSDIDLLHINRGRQPFDEGLSINEDSFFYRHNIHVPRIVYLIIVACGSFIITGGIEFAIAYGMYKKTETSVRLWRLPDTLSGDAAVTNFVQAIVTYWVESILVQGDLRSGLVKPIYFGWWPENFLLREVLRAKPRYHFKFIVFRWMEWLVFVGLRGLVWSVPLWFLFWPATVGILCAPGRHEGNDYYFNNYPAPQVFKLIFGGGEGFVLTPWIAFLHMYMYGHYLHVAKNQKSLPKTSDLEQQRGTSSSQPSENDANITALPKPEPKMYENSDLTPARTPVTPAPLEKPVNLAPEVVEPTNAAASPLQLNAPKLTDVDDSALAYDPTKVQDGEDRFVHNDVPLENAENPSRFVHSDAPIDMTHTTTVISEAQNLPSTLLPQDGNAVHHDTDAPSLSNVRKSVDSPRVPPSFSDDAVSSFSLVTAPSINNVGGSTAPSVNNQEREYDYDDTSSRSSTLTERPVVH.

Thr26 is modified (phosphothreonine). The residue at position 27 (Ser27) is a Phosphoserine. 3 helical membrane passes run 63-83, 182-202, and 221-241; these read IVYL…IEFA, LVWS…ILCA, and VFKL…IAFL. Disordered stretches follow at residues 260 to 312, 401 to 435, and 450 to 489; these read PKTS…APLE, STLL…VPPS, and PSIN…PVVH. The residue at position 263 (Ser263) is a Phosphoserine. Residues 268-282 show a composition bias toward polar residues; sequence QRGTSSSQPSENDAN. Positions 450–465 are enriched in polar residues; sequence PSINNVGGSTAPSVNN. Positions 477–489 are enriched in low complexity; sequence SRSSTLTERPVVH.

Its subcellular location is the endoplasmic reticulum membrane. This is an uncharacterized protein from Schizosaccharomyces pombe (strain 972 / ATCC 24843) (Fission yeast).